Reading from the N-terminus, the 232-residue chain is Phosphatidylserine decarboxylase proenzyme (232 aa).

Catalysis depends on serine 201, which acts as the Schiff-base intermediate with substrate; via pyruvic acid. Position 201 is a pyruvic acid (Ser); by autocatalysis (serine 201).

This sequence belongs to the phosphatidylserine decarboxylase family. PSD-A subfamily. In terms of assembly, heterodimer of a large membrane-associated beta subunit and a small pyruvoyl-containing alpha subunit. Pyruvate serves as cofactor. Is synthesized initially as an inactive proenzyme. Formation of the active enzyme involves a self-maturation process in which the active site pyruvoyl group is generated from an internal serine residue via an autocatalytic post-translational modification. Two non-identical subunits are generated from the proenzyme in this reaction, and the pyruvate is formed at the N-terminus of the alpha chain, which is derived from the carboxyl end of the proenzyme. The post-translation cleavage follows an unusual pathway, termed non-hydrolytic serinolysis, in which the side chain hydroxyl group of the serine supplies its oxygen atom to form the C-terminus of the beta chain, while the remainder of the serine residue undergoes an oxidative deamination to produce ammonia and the pyruvoyl prosthetic group on the alpha chain.

It localises to the cell membrane. The catalysed reaction is a 1,2-diacyl-sn-glycero-3-phospho-L-serine + H(+) = a 1,2-diacyl-sn-glycero-3-phosphoethanolamine + CO2. It functions in the pathway phospholipid metabolism; phosphatidylethanolamine biosynthesis; phosphatidylethanolamine from CDP-diacylglycerol: step 2/2. Functionally, catalyzes the formation of phosphatidylethanolamine (PtdEtn) from phosphatidylserine (PtdSer). This Mycolicibacterium smegmatis (strain ATCC 700084 / mc(2)155) (Mycobacterium smegmatis) protein is Phosphatidylserine decarboxylase proenzyme.